Consider the following 629-residue polypeptide: Pentatricopeptide repeat-containing protein At1g62930, chloroplastic (629 aa).

The transit peptide at 1 to 41 (MTSCVHLGIVASQSKKMSLAKRFAQLRKASPLFSLRGVYFS) directs the protein to the chloroplast. 15 PPR repeats span residues 79–113 (SIVE…RISY), 114–148 (DLYS…GYEP), 149–183 (DIVT…EYQP), 184–218 (NTVT…GCQP), 219–253 (DLFT…KIEA), 254–288 (DVVI…GIRP), 289–323 (NVVT…KINP), 324–358 (NVVT…SIDP), 359–393 (DIFT…DCFP), 394–428 (NVVT…GLVG), 429–463 (NTVT…GVPP), 464–498 (DIIT…KMEP), 499–533 (DIYT…GVKP), 534–568 (NVII…GTLP), and 569–603 (NSGT…GFVG).

This sequence belongs to the PPR family. P subfamily.

The protein resides in the plastid. The protein localises to the chloroplast. The polypeptide is Pentatricopeptide repeat-containing protein At1g62930, chloroplastic (Arabidopsis thaliana (Mouse-ear cress)).